The following is a 129-amino-acid chain: Histone H2A.J (129 aa).

The disordered stretch occupies residues 1–22; it reads MSGRGKQGGKVRAKAKSRSSRA. Ser2 bears the N-acetylserine mark. Ser2 bears the Phosphoserine mark. Lys6 carries the N6-acetyllysine modification. The span at 7-19 shows a compositional bias: basic residues; it reads QGGKVRAKAKSRS. Lys10 is modified (N6-lactoyllysine; alternate). Glycyl lysine isopeptide (Lys-Gly) (interchain with G-Cter in ubiquitin) cross-links involve residues Lys14 and Lys16. Gln105 is modified (N5-methylglutamine). A Glycyl lysine isopeptide (Lys-Gly) (interchain with G-Cter in ubiquitin) cross-link involves residue Lys120.

Belongs to the histone H2A family. In terms of assembly, the nucleosome is a histone octamer containing two molecules each of H2A, H2B, H3 and H4 assembled in one H3-H4 heterotetramer and two H2A-H2B heterodimers. The octamer wraps approximately 147 bp of DNA. Post-translationally, monoubiquitination of Lys-120 (H2AXK119ub) gives a specific tag for epigenetic transcriptional repression. Following DNA double-strand breaks (DSBs), it is ubiquitinated through 'Lys-63' linkage of ubiquitin moieties. Phosphorylation on Ser-2 is enhanced during mitosis. Phosphorylation on Ser-2 directly represses transcription.

Its subcellular location is the nucleus. It localises to the chromosome. Functionally, core component of nucleosome. Nucleosomes wrap and compact DNA into chromatin, limiting DNA accessibility to the cellular machineries which require DNA as a template. Histones thereby play a central role in transcription regulation, DNA repair, DNA replication and chromosomal stability. DNA accessibility is regulated via a complex set of post-translational modifications of histones, also called histone code, and nucleosome remodeling. This Gallus gallus (Chicken) protein is Histone H2A.J (H2A-IX).